The primary structure comprises 129 residues: MNLIQTLEKEQFDKLSAGKTIPEFGPGDTVIVNVKVVEGERSRVQAYEGVCIGRSGGGINESFTVRKISYGEGVERVFPLLSPMIDSIKVVRRGKVRRAKLYYLRNLRGKSARIVEKKQDRTAAVAAAE.

In terms of biological role, this protein is located at the 30S-50S ribosomal subunit interface and may play a role in the structure and function of the aminoacyl-tRNA binding site. This chain is Large ribosomal subunit protein bL19, found in Rhodopseudomonas palustris (strain ATCC BAA-98 / CGA009).